Consider the following 401-residue polypeptide: 1-deoxy-D-xylulose 5-phosphate reductoisomerase (401 aa).

7 residues coordinate NADPH: Thr-10, Gly-11, Ser-12, Ile-13, Gly-36, Asn-38, and Asn-124. Lys-125 provides a ligand contact to 1-deoxy-D-xylulose 5-phosphate. Residue Glu-126 participates in NADPH binding. Asp-150 provides a ligand contact to Mn(2+). 4 residues coordinate 1-deoxy-D-xylulose 5-phosphate: Ser-151, Glu-152, Ser-186, and His-209. Glu-152 is a Mn(2+) binding site. NADPH is bound at residue Gly-215. 1-deoxy-D-xylulose 5-phosphate-binding residues include Ser-222, Asn-227, Lys-228, and Glu-231. Glu-231 provides a ligand contact to Mn(2+).

This sequence belongs to the DXR family. Requires Mg(2+) as cofactor. Mn(2+) serves as cofactor.

It catalyses the reaction 2-C-methyl-D-erythritol 4-phosphate + NADP(+) = 1-deoxy-D-xylulose 5-phosphate + NADPH + H(+). The protein operates within isoprenoid biosynthesis; isopentenyl diphosphate biosynthesis via DXP pathway; isopentenyl diphosphate from 1-deoxy-D-xylulose 5-phosphate: step 1/6. Catalyzes the NADPH-dependent rearrangement and reduction of 1-deoxy-D-xylulose-5-phosphate (DXP) to 2-C-methyl-D-erythritol 4-phosphate (MEP). This is 1-deoxy-D-xylulose 5-phosphate reductoisomerase from Vibrio parahaemolyticus serotype O3:K6 (strain RIMD 2210633).